A 571-amino-acid polypeptide reads, in one-letter code: Proline--tRNA ligase (571 aa).

The protein belongs to the class-II aminoacyl-tRNA synthetase family. ProS type 1 subfamily. In terms of assembly, homodimer.

Its subcellular location is the cytoplasm. It carries out the reaction tRNA(Pro) + L-proline + ATP = L-prolyl-tRNA(Pro) + AMP + diphosphate. In terms of biological role, catalyzes the attachment of proline to tRNA(Pro) in a two-step reaction: proline is first activated by ATP to form Pro-AMP and then transferred to the acceptor end of tRNA(Pro). As ProRS can inadvertently accommodate and process non-cognate amino acids such as alanine and cysteine, to avoid such errors it has two additional distinct editing activities against alanine. One activity is designated as 'pretransfer' editing and involves the tRNA(Pro)-independent hydrolysis of activated Ala-AMP. The other activity is designated 'posttransfer' editing and involves deacylation of mischarged Ala-tRNA(Pro). The misacylated Cys-tRNA(Pro) is not edited by ProRS. This is Proline--tRNA ligase from Vibrio cholerae serotype O1 (strain ATCC 39541 / Classical Ogawa 395 / O395).